The following is a 310-amino-acid chain: Solute carrier family 25 member 47 (310 aa).

Solcar repeat units follow at residues methionine 1 to histidine 80, proline 93 to tryptophan 208, and proline 217 to leucine 304. Helical transmembrane passes span phenylalanine 3–valine 23, leucine 49–valine 69, isoleucine 98–threonine 116, glycine 192–alanine 212, valine 219–proline 239, and valine 275–phenylalanine 295.

It belongs to the mitochondrial carrier (TC 2.A.29) family.

Its subcellular location is the mitochondrion inner membrane. It is found in the mitochondrion outer membrane. It carries out the reaction NAD(+)(in) = NAD(+)(out). The enzyme catalyses acetyl-CoA(in) = acetyl-CoA(out). In terms of biological role, mitochondrial NAD(+) transporter that acts as a 'metabolic gate' in hepatic lipogenesis. Provides NAD(+) substrate to mitochondrial SIRT3 deacetylase and enables its NAD(+)-dependent activities in mitochondrial energy metabolism. This triggers downstream activation of PRKAA1/AMPK-alpha signaling cascade that negatively regulates sterol regulatory element-binding protein (SREBP) transcriptional activities and ATP-consuming lipogenesis to restore cellular energy balance. May transport other mitochondrial metabolites having an aromatic nucleotide and phosphate groups, such as acetyl-CoA. Does not transport amino acids. The transport mechanism remains to be elucidated. The chain is Solute carrier family 25 member 47 from Rattus norvegicus (Rat).